Reading from the N-terminus, the 355-residue chain is Protein RecA (355 aa).

67–74 (GPESSGKT) lines the ATP pocket. Positions 335–355 (NSLVSDVESEDEGASESNEEF) are disordered. Positions 341 to 355 (VESEDEGASESNEEF) are enriched in acidic residues.

It belongs to the RecA family.

It is found in the cytoplasm. Can catalyze the hydrolysis of ATP in the presence of single-stranded DNA, the ATP-dependent uptake of single-stranded DNA by duplex DNA, and the ATP-dependent hybridization of homologous single-stranded DNAs. It interacts with LexA causing its activation and leading to its autocatalytic cleavage. This is Protein RecA from Sodalis glossinidius.